We begin with the raw amino-acid sequence, 792 residues long: Zinc finger protein 606 (792 aa).

A KRAB domain is found at 62–133 (VTFKDVAVDF…EQACPQRTCP (72 aa)). The C2H2-type 1; degenerate zinc-finger motif lies at 289-311 (FKCTDAVKSFNHIIHFGDHKGIH). The C2H2-type 2; degenerate zinc finger occupies 317-344 (YEYKECHQIFNQSPSFNEHPRLHVGENQ). The C2H2-type 3; degenerate zinc finger occupies 400–422 (YDYNECGTSFIWSSYLIQHKKTH). 13 C2H2-type zinc fingers span residues 428–450 (YECD…ERTH), 456–478 (YECN…KRIH), 484–506 (YVCN…QRTH), 512–534 (FECT…MRMH), 540–562 (FKCD…ERTH), 568–590 (YKCT…QRTH), 596–618 (YNCQ…EIIH), 624–646 (YECN…QRTH), 652–674 (YECN…RRIH), 680–702 (YKCN…RRTH), 708–730 (YRCN…LRNH), 736–758 (YKCN…QRMH), and 764–786 (FICS…QRNH).

The protein belongs to the krueppel C2H2-type zinc-finger protein family. Widely expressed in adult and fetal tissues.

It localises to the nucleus. Its function is as follows. May act as a transcriptional repressor. This Homo sapiens (Human) protein is Zinc finger protein 606 (ZNF606).